Reading from the N-terminus, the 422-residue chain is Histidine--tRNA ligase (422 aa).

The protein belongs to the class-II aminoacyl-tRNA synthetase family. Homodimer.

Its subcellular location is the cytoplasm. It catalyses the reaction tRNA(His) + L-histidine + ATP = L-histidyl-tRNA(His) + AMP + diphosphate + H(+). The protein is Histidine--tRNA ligase of Lysinibacillus sphaericus (strain C3-41).